The sequence spans 633 residues: MRLLSLAGAMALPLCVLAHPTHRTRGIARRGIDLTPYRLPGNAEYTSSRTSAMRSLLFERADGEDYVETAKKVLQSVHPDATFRVIDDHYVGDNGVAHVHLLQTAHGIDIDNANFNVNIDKNGKVLSYGNSFFSGKIPDSDPLTKRSFSDPVEALKAAATGLGIPLTADDVTSEGLDGTTSYTFKGTKGALSDPTADLVYLAKPDNTLALTWRVETDMNSNWLLTYVDAETAETIHGVVDYISDATYQVYPWGLNDPTEGSRQILEDPWDSKASEFTWIGDGKAKYKTTRGNNGIAQSNPDGGDDYLNNHRPESSSLKFVYPYSPNATSPSSYIDASITQLFYTANTYHDLLYTLGFNEKAGNFEANNNGAGGKGNDFVILNAQDGSGTNNAMFGSPPDGRPGRMYMFIWTESNPPRDGSMEAGIVIHEYTHGLSSRLTGGPANARCVDGEESGGMGEGWGDFMATAVRLKSGDTRQTDYTMGAWAANDPKGIRDYPYSTSMTKNPLTYAHLNNVTEVHEGGTIWASMLYEVMWNLIDKHGKNDAPKPDLKDGVPTDGKYLSMKLVMDGMALQPCNPSFIQARDAILDADVALTKSGNQCEIWKGFAKRGLGERAALKNGIRVDSFDVPKGVC.

The N-terminal stretch at Met-1–Ala-18 is a signal peptide. A propeptide spanning residues His-19 to Asp-244 is cleaved from the precursor. Asn-326 carries N-linked (GlcNAc...) asparagine glycosylation. A Zn(2+)-binding site is contributed by His-428. The active site involves Glu-429. His-432 contributes to the Zn(2+) binding site. N-linked (GlcNAc...) asparagine glycosylation occurs at Asn-514.

It belongs to the peptidase M36 family. Zn(2+) serves as cofactor.

It is found in the secreted. Its function is as follows. Secreted metalloproteinase that allows assimilation of proteinaceous substrates. The protein is Extracellular metalloproteinase mep (mep) of Aspergillus terreus (strain NIH 2624 / FGSC A1156).